We begin with the raw amino-acid sequence, 260 residues long: Thiazole synthase (260 aa).

Lys96 serves as the catalytic Schiff-base intermediate with DXP. Residues Gly157, 184-185, and 206-207 each bind 1-deoxy-D-xylulose 5-phosphate; these read AG and NT.

This sequence belongs to the ThiG family. As to quaternary structure, homotetramer. Forms heterodimers with either ThiH or ThiS.

Its subcellular location is the cytoplasm. The catalysed reaction is [ThiS sulfur-carrier protein]-C-terminal-Gly-aminoethanethioate + 2-iminoacetate + 1-deoxy-D-xylulose 5-phosphate = [ThiS sulfur-carrier protein]-C-terminal Gly-Gly + 2-[(2R,5Z)-2-carboxy-4-methylthiazol-5(2H)-ylidene]ethyl phosphate + 2 H2O + H(+). It functions in the pathway cofactor biosynthesis; thiamine diphosphate biosynthesis. In terms of biological role, catalyzes the rearrangement of 1-deoxy-D-xylulose 5-phosphate (DXP) to produce the thiazole phosphate moiety of thiamine. Sulfur is provided by the thiocarboxylate moiety of the carrier protein ThiS. In vitro, sulfur can be provided by H(2)S. This Bradyrhizobium diazoefficiens (strain JCM 10833 / BCRC 13528 / IAM 13628 / NBRC 14792 / USDA 110) protein is Thiazole synthase.